We begin with the raw amino-acid sequence, 126 residues long: Large ribosomal subunit protein bL12 (126 aa).

This sequence belongs to the bacterial ribosomal protein bL12 family. In terms of assembly, homodimer. Part of the ribosomal stalk of the 50S ribosomal subunit. Forms a multimeric L10(L12)X complex, where L10 forms an elongated spine to which 2 to 4 L12 dimers bind in a sequential fashion. Binds GTP-bound translation factors.

Its function is as follows. Forms part of the ribosomal stalk which helps the ribosome interact with GTP-bound translation factors. Is thus essential for accurate translation. The chain is Large ribosomal subunit protein bL12 from Nitrosospira multiformis (strain ATCC 25196 / NCIMB 11849 / C 71).